The chain runs to 585 residues: Clathrin heavy chain linker domain-containing protein 1 (585 aa).

The stretch at 118-239 forms a coiled coil; it reads QLEAKMRIID…DLRFRHQRLQ (122 aa).

This chain is Clathrin heavy chain linker domain-containing protein 1 (Clhc1), found in Rattus norvegicus (Rat).